We begin with the raw amino-acid sequence, 185 residues long: MIADIKKATEQKMQKSLDALKVDFSKVRSGRPHTGLLDHITVDYYGTPTPIRQLANVTLADARTIGVIPWDKKAFSAIEKAIRDSDMGLNPMTAGEMVRVPMPPLTEERRKDLTKIVRTEAETARIAMRNIRRDANTQLKELLKDKLIAEDEDRRAQDDIQKLTDRYIAEVDKLLQAKEAELMAV.

It belongs to the RRF family.

It is found in the cytoplasm. Functionally, responsible for the release of ribosomes from messenger RNA at the termination of protein biosynthesis. May increase the efficiency of translation by recycling ribosomes from one round of translation to another. This chain is Ribosome-recycling factor, found in Nitrosomonas eutropha (strain DSM 101675 / C91 / Nm57).